The following is a 401-amino-acid chain: Imidazolonepropionase (401 aa).

The Fe(3+) site is built by H66 and H68. Residues H66 and H68 each contribute to the Zn(2+) site. 4-imidazolone-5-propanoate is bound by residues R75, Y138, and H171. Y138 provides a ligand contact to N-formimidoyl-L-glutamate. Residue H236 participates in Fe(3+) binding. Position 236 (H236) interacts with Zn(2+). Residue Q239 coordinates 4-imidazolone-5-propanoate. D311 is a Fe(3+) binding site. Residue D311 participates in Zn(2+) binding. The N-formimidoyl-L-glutamate site is built by N313 and G315. T316 contributes to the 4-imidazolone-5-propanoate binding site.

This sequence belongs to the metallo-dependent hydrolases superfamily. HutI family. The cofactor is Zn(2+). Fe(3+) serves as cofactor.

It is found in the cytoplasm. The catalysed reaction is 4-imidazolone-5-propanoate + H2O = N-formimidoyl-L-glutamate. It functions in the pathway amino-acid degradation; L-histidine degradation into L-glutamate; N-formimidoyl-L-glutamate from L-histidine: step 3/3. In terms of biological role, catalyzes the hydrolytic cleavage of the carbon-nitrogen bond in imidazolone-5-propanoate to yield N-formimidoyl-L-glutamate. It is the third step in the universal histidine degradation pathway. The polypeptide is Imidazolonepropionase (Pseudomonas putida (strain ATCC 700007 / DSM 6899 / JCM 31910 / BCRC 17059 / LMG 24140 / F1)).